A 1447-amino-acid polypeptide reads, in one-letter code: Adhesion G protein-coupled receptor L3 (1447 aa).

The first 19 residues, 1-19 (MWPSQLLIFMMLLAPIIHA), serve as a signal peptide directing secretion. Topologically, residues 20–862 (FSRAPIPMAV…VKHSDAVHDL (843 aa)) are extracellular. An SUEL-type lectin domain is found at 35–124 (SCESYPIELR…KYLEVQYECV (90 aa)). Disulfide bonds link cysteine 36/cysteine 66, cysteine 45/cysteine 123, cysteine 78/cysteine 110, cysteine 91/cysteine 97, and cysteine 135/cysteine 317. Residue asparagine 93 is glycosylated (N-linked (GlcNAc...) asparagine). The Olfactomedin-like domain maps to 134–393 (LCPGLLKGVY…VVKYSLDFGP (260 aa)). Residues 249 to 279 (YHDTSPYRWGGKSDIDLAVDENGLWVIYATE) form an interaction with FLRT3 region. Ca(2+) contacts are provided by aspartate 264, asparagine 312, alanine 313, and valine 367. The tract at residues 426 to 473 (DISTTGPLGMGSTTTSTTLRTTTLSPGRSTTPSVSGRRNRSTSTPSPA) is disordered. Low complexity predominate over residues 428 to 458 (STTGPLGMGSTTTSTTLRTTTLSPGRSTTPS). N-linked (GlcNAc...) asparagine glycans are attached at residues asparagine 464, asparagine 549, asparagine 746, asparagine 759, asparagine 804, and asparagine 830. Residues 675 to 854 (DIVRENTDNI…AVLMAHVEVK (180 aa)) enclose the GAIN-B domain. Cystine bridges form between cysteine 805–cysteine 836 and cysteine 824–cysteine 838. The interval 805–854 (CSFWSYSKRTMTGYWSTQGCRLLTTNKTHTTCSCNHLTNFAVLMAHVEVK) is GPS. The segment at 842–855 (TNFAVLMAHVEVKH) is stachel. The helical transmembrane segment at 863–888 (LLDVITWVGILLSLVCLLICIFTFCF) threads the bilayer. At 889–896 (FRGLQSDR) the chain is on the cytoplasmic side. The chain crosses the membrane as a helical span at residues 897 to 918 (NTIHKNLCISLFVAELLFLIGI). Topologically, residues 919-926 (NRTDQPIA) are extracellular. The helical transmembrane segment at 927–950 (CAVFAALLHFFFLAAFTWMFLEGV) threads the bilayer. Cysteine 927 and cysteine 999 are disulfide-bonded. At 951-967 (QLYIMLVEVFESEHSRR) the chain is on the cytoplasmic side. Residues 968–990 (KYFYLVGYGMPALIVAVSAAVDY) traverse the membrane as a helical segment. Topologically, residues 991-1005 (RSYGTDKVCWLRLDT) are extracellular. Residues 1006 to 1027 (YFIWSFIGPATLIIMLNVIFLG) traverse the membrane as a helical segment. Topologically, residues 1028-1053 (IALYKMFHHTAILKPESGCLDNIKSW) are cytoplasmic. Residues 1054 to 1073 (VIGAIALLCLLGLTWAFGLM) form a helical membrane-spanning segment. At 1074–1078 (YINES) the chain is on the extracellular side. Asparagine 1076 carries an N-linked (GlcNAc...) asparagine glycan. A helical membrane pass occupies residues 1079–1104 (TVIMAYLFTIFNSLQGMFIFIFHCVL). Residues 1105 to 1447 (QKKVRKEYGK…KGPAHLVTSL (343 aa)) lie on the Cytoplasmic side of the membrane. The segment at 1123-1147 (GKSTESSIGSGKTSGSRTPGRYSTG) is disordered. Position 1164 is a phosphoserine (serine 1164). Residues 1423–1447 (IVPPNKDGTPPEGSSKGPAHLVTSL) are disordered. A PDZ-binding motif is present at residues 1442 to 1447 (HLVTSL).

This sequence belongs to the G-protein coupled receptor 2 family. LN-TM7 subfamily. Heterodimer of 2 chains generated by proteolytic processing; the large extracellular N-terminal fragment and the membrane-bound C-terminal fragment predominantly remain associated and non-covalently linked. Interacts (via olfactomedin-like domain) with FLRT1 (via extracellular domain). Interacts (via olfactomedin-like domain) with FLRT2 (via extracellular domain). Interacts (via olfactomedin-like domain) with FLRT3 (via extracellular domain); the interaction is direct. Interacts (via extracellular domain) with TENM1. Interacts (via extracellular domain) with TENM2. Interacts (via extracellular domain) with TENM3. Identified in a complex with FLRT3 and UNC5B; does not interact with UNC5B by itself. Identified in a complex with FLRT3 and UNC5D; does not interact with UNC5D by itself. In terms of assembly, interacts (via PDZ-binding motif) with SHANK3. Interacts (via PDZ-binding motif) with DLG4. Post-translationally, autoproteolytically processed at the GPS region of the GAIN-B domain; this cleavage modulates receptor activity.

Its subcellular location is the cell membrane. The protein localises to the postsynaptic cell membrane. It is found in the cell projection. It localises to the axon. The protein resides in the cell junction. Its activity is regulated as follows. Forms a heterodimer of 2 chains generated by proteolytic processing that remain associated through non-covalent interactions mediated by the GAIN-B domain. In the inactivated receptor, the Stachel sequence (also named stalk) is embedded in the GAIN-B domain, where it adopts a beta-strand conformation. On activation, the Stachel moves into the 7 transmembrane region and adopts a twisted hook-shaped configuration that forms contacts within the receptor, leading to coupling of a G-alpha protein, which activates signaling. The cleaved GAIN-B and N-terminal domains can then dissociate from the rest of the receptor. Functionally, orphan adhesion G-protein coupled receptor (aGPCR), which mediates synapse specificity. Ligand binding causes a conformation change that triggers signaling via guanine nucleotide-binding proteins (G proteins) and modulates the activity of downstream effectors. ADGRL3 is coupled with different classes of G alpha proteins, such as G(12)/G(13), G(s), G(i) or G(q), depending on the context. Coupling to G(12)/G(13) G proteins, which mediates the activation Rho small GTPases is the most efficient. Following G-protein coupled receptor activation, associates with cell adhesion molecules that are expressed at the surface of adjacent cells to direct synapse specificity. Specifically mediates the establishment of Schaffer-collateral synapses formed by CA3-region axons on CA1-region pyramidal neurons in the hippocampus. Localizes to postsynaptic spines in excitatory synapses in the S.oriens and S.radiatum and interacts with presynaptic cell adhesion molecules FLRT3 and TENM2, promoting synapse formation. Plays a role in the development of glutamatergic synapses in the cortex. Important in determining the connectivity rates between the principal neurons in the cortex. In terms of biological role, orphan adhesion G-protein coupled receptor (aGPCR), which mediates synapse specificity. Ligand binding causes a conformation change that triggers signaling via guanine nucleotide-binding proteins (G proteins) and modulates the activity of downstream effectors, such as adenylate cyclase. Isoform 1 is specifically coupled to G(s) G proteins and mediates activation of adenylate cyclase activity. Following G-protein coupled receptor activation, undergoes liquid-liquid phase transition, associates with (1) cell adhesion molecules that are expressed at the surface of adjacent cells, as well as (2) PDZ-containing proteins, such as SHANK3 and DLG4, in the cytoplasm to direct synapse formation. The sequence is that of Adhesion G protein-coupled receptor L3 from Homo sapiens (Human).